Reading from the N-terminus, the 456-residue chain is MTOR-associated protein MEAK7 (456 aa).

The N-myristoyl glycine moiety is linked to residue Gly-2. One can recognise a TLDc domain in the interval 244–412 (SILDVLSVMY…FDKMEVWAVG (169 aa)).

Interacts (via C-terminal domain) with MTOR and MLST8; the interaction with MTOR increases upon nutrient stimulation.

The protein localises to the membrane. Its subcellular location is the cytoplasm. The protein resides in the lysosome. Functionally, activates an alternative mTOR signaling through RPS6KB2 activation and EIF4EBP1 repression to regulate cell proliferation and migration. Recruits MTOR at the lysosome, essential for MTOR signaling at the lysosome. This chain is MTOR-associated protein MEAK7, found in Homo sapiens (Human).